A 612-amino-acid polypeptide reads, in one-letter code: Transcription factor ffsR (612 aa).

Residues 1–12 (MDTLTAPTTQSE) are compositionally biased toward polar residues. Residues 1 to 21 (MDTLTAPTTQSEQPPPPLTAS) form a disordered region. The segment at residues 28–60 (CDRCRSHKLRCNRDLMTSTNSPCQRCRKARVKC) is a DNA-binding region (zn(2)-C6 fungal-type). Over residues 73–82 (EELKNGENVH) the composition is skewed to basic and acidic residues. Disordered regions lie at residues 73–130 (EELK…SMSG), 154–249 (DGST…VTSS), and 451–470 (GQGP…TTTN). Composition is skewed to polar residues over residues 92-103 (SHRTASTPSNHA), 154-169 (DGST…TNGS), and 238-249 (LTQQHPAGVTSS). The segment covering 458 to 470 (PSQGSSSRSTTTN) has biased composition (low complexity).

It is found in the nucleus. Functionally, transcription factor that specifically regulates the expression of the gene cluster that mediates the biosynthesis of the cytotoxic leucine-containing cytochalasans, including aspochalasin C, aspochalasin E, TMC-169, flavichalasine F, aspergillin PZ, aspochalasin M and flavichalasine G. The polypeptide is Transcription factor ffsR (Aspergillus flavipes).